Consider the following 388-residue polypeptide: uncharacterized protein (388 aa).

Its subcellular location is the mitochondrion. This is an uncharacterized protein from Dictyostelium citrinum (Slime mold).